The following is a 363-amino-acid chain: Phosphoserine aminotransferase (363 aa).

Arg42 contributes to the L-glutamate binding site. Pyridoxal 5'-phosphate contacts are provided by residues 76 to 77, Trp102, Thr156, Asp175, and Gln198; that span reads GR. An N6-(pyridoxal phosphate)lysine modification is found at Lys199. Residue 240–241 coordinates pyridoxal 5'-phosphate; sequence NT.

The protein belongs to the class-V pyridoxal-phosphate-dependent aminotransferase family. SerC subfamily. As to quaternary structure, homodimer. Requires pyridoxal 5'-phosphate as cofactor.

Its subcellular location is the cytoplasm. It catalyses the reaction O-phospho-L-serine + 2-oxoglutarate = 3-phosphooxypyruvate + L-glutamate. It carries out the reaction 4-(phosphooxy)-L-threonine + 2-oxoglutarate = (R)-3-hydroxy-2-oxo-4-phosphooxybutanoate + L-glutamate. Its pathway is amino-acid biosynthesis; L-serine biosynthesis; L-serine from 3-phospho-D-glycerate: step 2/3. The protein operates within cofactor biosynthesis; pyridoxine 5'-phosphate biosynthesis; pyridoxine 5'-phosphate from D-erythrose 4-phosphate: step 3/5. Catalyzes the reversible conversion of 3-phosphohydroxypyruvate to phosphoserine and of 3-hydroxy-2-oxo-4-phosphonooxybutanoate to phosphohydroxythreonine. This is Phosphoserine aminotransferase from Shewanella sp. (strain W3-18-1).